Consider the following 686-residue polypeptide: Eomesodermin homolog (686 aa).

The segment at 27–46 is disordered; that stretch reads GGSGGSAGHLPSAAPSPQKL. Residues 34-43 are compositionally biased toward low complexity; that stretch reads GHLPSAAPSP. Position 107 is a phosphoserine (Ser107). Positions 276 to 456 form a DNA-binding region, T-box; sequence LWLKFHRHQT…HNPFAKGFRD (181 aa). Residues 571-686 form a required for transcription activation region; sequence AMAGWGGRGS…GGYYAFYTTP (116 aa). Residues 639 to 686 are disordered; the sequence is ACKRRRLSPSNSSNENSPSIKCEDINAEEYSKDTSKGMGGYYAFYTTP. Low complexity predominate over residues 646–657; that stretch reads SPSNSSNENSPS. Basic and acidic residues predominate over residues 659–673; sequence KCEDINAEEYSKDTS.

In terms of tissue distribution, expressed in CD8+ T-cells.

The protein resides in the nucleus. In terms of biological role, functions as a transcriptional activator playing a crucial role during development. Functions in trophoblast differentiation and later in gastrulation, regulating both mesoderm delamination and endoderm specification. Plays a role in brain development being required for the specification and the proliferation of the intermediate progenitor cells and their progeny in the cerebral cortex. Required for differentiation and migration of unipolar dendritic brush cells. Also involved in the differentiation of CD8+ T-cells during immune response regulating the expression of lytic effector genes. This chain is Eomesodermin homolog (EOMES), found in Homo sapiens (Human).